A 125-amino-acid polypeptide reads, in one-letter code: Histone H2B (125 aa).

The disordered stretch occupies residues 1–32 (MAPKVRAAKKGEKRVGKAKSGTAETAKRRRGK). The O-linked (GlcNAc) serine glycan is linked to S112. K120 participates in a covalent cross-link: Glycyl lysine isopeptide (Lys-Gly) (interchain with G-Cter in ubiquitin).

This sequence belongs to the histone H2B family. The nucleosome is a histone octamer containing two molecules each of H2A, H2B, H3 and H4 assembled in one H3-H4 heterotetramer and two H2A-H2B heterodimers. The octamer wraps approximately 147 bp of DNA. Post-translationally, monoubiquitination of Lys-120 gives a specific tag for epigenetic transcriptional activation and is also prerequisite for histone H3 'Lys-4' and 'Lys-79' methylation. GlcNAcylation at Ser-112 promotes monoubiquitination of Lys-120. It fluctuates in response to extracellular glucose, and associates with transcribed genes.

It is found in the nucleus. Its subcellular location is the chromosome. Core component of nucleosome. Nucleosomes wrap and compact DNA into chromatin, limiting DNA accessibility to the cellular machineries which require DNA as a template. Histones thereby play a central role in transcription regulation, DNA repair, DNA replication and chromosomal stability. DNA accessibility is regulated via a complex set of post-translational modifications of histones, also called histone code, and nucleosome remodeling. The protein is Histone H2B of Acropora formosa (Staghorn coral).